The following is a 410-amino-acid chain: Dipeptidase 1 (410 aa).

The first 16 residues, Met-1–Ala-16, serve as a signal peptide directing secretion. Residues His-36 and Asp-38 each contribute to the Zn(2+) site. Asn-57 is a glycosylation site (N-linked (GlcNAc...) asparagine). The cysteines at positions 87 and 170 are disulfide-linked. Glu-141 serves as a coordination point for Zn(2+). His-168 contributes to the substrate binding site. His-214 and His-235 together coordinate Zn(2+). Cysteines 242 and 274 form a disulfide. Substrate contacts are provided by Arg-246 and Asp-304. A lipid anchor (GPI-anchor amidated serine) is attached at Ser-384. Residues Glu-385–Leu-410 constitute a propeptide, removed in mature form.

It belongs to the metallo-dependent hydrolases superfamily. Peptidase M19 family. In terms of assembly, homodimer; disulfide-linked. Requires Zn(2+) as cofactor.

It localises to the apical cell membrane. It is found in the cell projection. The protein localises to the microvillus membrane. The enzyme catalyses an L-aminoacyl-L-amino acid + H2O = 2 an L-alpha-amino acid. It catalyses the reaction leukotriene D4 + H2O = leukotriene E4 + glycine. The catalysed reaction is L-cystine-bis-glycine + 2 H2O = L-cystine + 2 glycine. It carries out the reaction a beta-lactam + H2O = a substituted beta-amino acid. The enzyme catalyses glycyldehydrophenylalanine + H2O = 2,3-didehydrophenylalanine + glycine. With respect to regulation, inhibited by L-penicillamine. Beta-lactamase activity is inhibited by cilastatin. In terms of biological role, hydrolyzes a wide range of dipeptides including the conversion of leukotriene D4 to leukotriene E4. Hydrolyzes cystinyl-bis-glycine (cys-bis-gly) formed during glutathione degradation. Also possesses beta lactamase activity and hydrolytically inactivates beta-lactam antibiotics. Independently of its dipeptidase activity, acts as an adhesion receptor for neutrophil recruitment from bloodstream into inflamed lungs and liver. In Oryctolagus cuniculus (Rabbit), this protein is Dipeptidase 1 (DPEP1).